A 70-amino-acid chain; its full sequence is Non-histone chromosomal protein H6 (70 aa).

A disordered region spans residues 1–70 (MPKRKSATKG…AAGDGAGNAK (70 aa)). Residues 30–45 (AKPKKAAAPKKAVKGK) are compositionally biased toward basic residues. The segment covering 46-57 (KAAENGDAKAEA) has biased composition (basic and acidic residues).

Belongs to the HMGN family.

Its subcellular location is the nucleus. The protein resides in the secreted. Non-histone protein that probably binds to the inner side of nucleosomal DNA, altering the association between the DNA and the nucleosome octamer. Functionally, oncorhyncin III has antibacterial activity against Gram-positive and Gram-negative bacteria at submicromolar concentrations. This Oncorhynchus mykiss (Rainbow trout) protein is Non-histone chromosomal protein H6.